Consider the following 447-residue polypeptide: Ribulose bisphosphate carboxylase large chain (447 aa).

The residue at position 5 (K5) is an N6,N6,N6-trimethyllysine. 2 residues coordinate substrate: N114 and T164. K166 (proton acceptor) is an active-site residue. K168 is a binding site for substrate. Residues K192, D194, and E195 each coordinate Mg(2+). N6-carboxylysine is present on K192. H285 serves as the catalytic Proton acceptor. 3 residues coordinate substrate: R286, H318, and S370.

It belongs to the RuBisCO large chain family. Type I subfamily. In terms of assembly, heterohexadecamer of 8 large chains and 8 small chains; disulfide-linked. The disulfide link is formed within the large subunit homodimers. Mg(2+) serves as cofactor. The disulfide bond which can form in the large chain dimeric partners within the hexadecamer appears to be associated with oxidative stress and protein turnover.

The protein resides in the plastid. It localises to the chloroplast. It carries out the reaction 2 (2R)-3-phosphoglycerate + 2 H(+) = D-ribulose 1,5-bisphosphate + CO2 + H2O. The catalysed reaction is D-ribulose 1,5-bisphosphate + O2 = 2-phosphoglycolate + (2R)-3-phosphoglycerate + 2 H(+). Functionally, ruBisCO catalyzes two reactions: the carboxylation of D-ribulose 1,5-bisphosphate, the primary event in carbon dioxide fixation, as well as the oxidative fragmentation of the pentose substrate in the photorespiration process. Both reactions occur simultaneously and in competition at the same active site. The protein is Ribulose bisphosphate carboxylase large chain of Camassia leichtlinii (Western quamash).